An 810-amino-acid chain; its full sequence is Phenylalanine--tRNA ligase beta subunit (810 aa).

In terms of domain architecture, tRNA-binding spans 39–154 (APPTEKIVVG…EGTPVGQDIR (116 aa)). The 76-residue stretch at 405–480 (PQRAPVSMRA…RIYGFEKIPA (76 aa)) folds into the B5 domain. Positions 458, 464, 467, and 468 each coordinate Mg(2+). The FDX-ACB domain occupies 707–809 (SKFPPVRRDI…MARVYGARLR (103 aa)).

Belongs to the phenylalanyl-tRNA synthetase beta subunit family. Type 1 subfamily. As to quaternary structure, tetramer of two alpha and two beta subunits. The cofactor is Mg(2+).

The protein localises to the cytoplasm. The enzyme catalyses tRNA(Phe) + L-phenylalanine + ATP = L-phenylalanyl-tRNA(Phe) + AMP + diphosphate + H(+). In Burkholderia mallei (strain ATCC 23344), this protein is Phenylalanine--tRNA ligase beta subunit.